The chain runs to 251 residues: Orcokinin peptides type A (251 aa).

The N-terminal stretch at Met-1–Ala-20 is a signal peptide. 3 consecutive propeptides follow at residues Gly-21 to Val-46, Asp-225 to Asp-231, and Asn-249 to Glu-251.

It belongs to the orcokinin family.

Its subcellular location is the secreted. In terms of biological role, myotropic peptides that enhance both the frequency and amplitude of spontaneous hindgut contractions. This chain is Orcokinin peptides type A, found in Procambarus clarkii (Red swamp crayfish).